The primary structure comprises 335 residues: Nucleoid-associated protein PputGB1_0980 (335 aa).

It belongs to the YejK family.

It localises to the cytoplasm. It is found in the nucleoid. The polypeptide is Nucleoid-associated protein PputGB1_0980 (Pseudomonas putida (strain GB-1)).